The chain runs to 425 residues: MHKILVRSNYKPLVGQIKINGSKNAILPIMAASLLSSSSVVLHNVPDLIDVHLMSELLEGLGAKVNFMHNKDHKANHTLETDCSNINNYAIQYETASKLRASFLMLGPMLSRFGKARTAFPGGCNIGKRPVDMHIKALEEMGAKIEIDGYNIIATVKGKLQGRKITLEKISVGATENIIMAATLAEGVTTINNAATEPEILDLIEFLKKIGADIKINNTKVIITGVKKLNGCIHKIISDRIEAGTYALAAIITNGKLVLEGINLSDIRCIANELEAIGAMVELYDGSIVISRKNGSIKSTNVATDPYPNFPSDMQPQLMSAMCIADGISVIEENIFENRFSHADELRKLGANISIKKNKAAINGIKSLSGANLYATDLRSTAALVLASLVASGETTINNSHHLWRGYEAMHEKLNSCGADISISP.

Lysine 23–asparagine 24 provides a ligand contact to phosphoenolpyruvate. Arginine 100 serves as a coordination point for UDP-N-acetyl-alpha-D-glucosamine. Catalysis depends on cysteine 124, which acts as the Proton donor. Cysteine 124 is modified (2-(S-cysteinyl)pyruvic acid O-phosphothioketal). The UDP-N-acetyl-alpha-D-glucosamine site is built by aspartate 313 and isoleucine 335.

This sequence belongs to the EPSP synthase family. MurA subfamily.

The protein resides in the cytoplasm. It catalyses the reaction phosphoenolpyruvate + UDP-N-acetyl-alpha-D-glucosamine = UDP-N-acetyl-3-O-(1-carboxyvinyl)-alpha-D-glucosamine + phosphate. It participates in cell wall biogenesis; peptidoglycan biosynthesis. Its function is as follows. Cell wall formation. Adds enolpyruvyl to UDP-N-acetylglucosamine. The sequence is that of UDP-N-acetylglucosamine 1-carboxyvinyltransferase from Wolbachia sp. subsp. Brugia malayi (strain TRS).